Reading from the N-terminus, the 367-residue chain is 3-dehydroquinate synthase (367 aa).

NAD(+)-binding positions include 69-74 (DGEAFK), 103-107 (GVIGD), 127-128 (TT), Lys-140, and Lys-149. Residues Glu-182, His-245, and His-262 each contribute to the Zn(2+) site.

This sequence belongs to the sugar phosphate cyclases superfamily. Dehydroquinate synthase family. Co(2+) is required as a cofactor. It depends on Zn(2+) as a cofactor. The cofactor is NAD(+).

The protein resides in the cytoplasm. It catalyses the reaction 7-phospho-2-dehydro-3-deoxy-D-arabino-heptonate = 3-dehydroquinate + phosphate. The protein operates within metabolic intermediate biosynthesis; chorismate biosynthesis; chorismate from D-erythrose 4-phosphate and phosphoenolpyruvate: step 2/7. Functionally, catalyzes the conversion of 3-deoxy-D-arabino-heptulosonate 7-phosphate (DAHP) to dehydroquinate (DHQ). In Ectopseudomonas mendocina (strain ymp) (Pseudomonas mendocina), this protein is 3-dehydroquinate synthase.